The chain runs to 197 residues: UPF0056 inner membrane protein YhgN (197 aa).

At 1-3 (MNE) the chain is on the periplasmic side. A helical membrane pass occupies residues 4 to 24 (IISAAVLLILIMDPLGNLPIF). Residues 25–44 (MSVLKHTEPKRRRAIMVREL) lie on the Cytoplasmic side of the membrane. Residues 45–65 (LIALLVMLVFLFAGEKILAFL) traverse the membrane as a helical segment. Residues 66–71 (SLRAET) are Periplasmic-facing. A helical membrane pass occupies residues 72 to 92 (VSISGGIILFLIAIKMIFPSA). Topologically, residues 93–105 (SGNSSGLPAGEEP) are cytoplasmic. The chain crosses the membrane as a helical span at residues 106–126 (FIVPLAIPLVAGPTILATLML). The Periplasmic portion of the chain corresponds to 127-138 (LSHQYPNQMGHL). A helical membrane pass occupies residues 139–159 (VIALLLAWGGTFVILLQSSLF). The Cytoplasmic portion of the chain corresponds to 160-173 (LRLLGEKGVNALER). The chain crosses the membrane as a helical span at residues 174-194 (LMGLILVMMATQMFLDGIRMW). Residues 195–197 (MKG) lie on the Periplasmic side of the membrane.

The protein belongs to the UPF0056 (MarC) family.

It localises to the cell inner membrane. In Escherichia coli O157:H7, this protein is UPF0056 inner membrane protein YhgN (yhgN).